A 344-amino-acid chain; its full sequence is Uroporphyrinogen decarboxylase (344 aa).

Substrate contacts are provided by residues 23–27 (RQAGR), aspartate 73, tyrosine 149, threonine 204, and histidine 321.

Belongs to the uroporphyrinogen decarboxylase family. Homodimer.

It localises to the cytoplasm. It carries out the reaction uroporphyrinogen III + 4 H(+) = coproporphyrinogen III + 4 CO2. Its pathway is porphyrin-containing compound metabolism; protoporphyrin-IX biosynthesis; coproporphyrinogen-III from 5-aminolevulinate: step 4/4. Functionally, catalyzes the decarboxylation of four acetate groups of uroporphyrinogen-III to yield coproporphyrinogen-III. This chain is Uroporphyrinogen decarboxylase, found in Francisella philomiragia subsp. philomiragia (strain ATCC 25017 / CCUG 19701 / FSC 153 / O#319-036).